Consider the following 295-residue polypeptide: Protoheme IX farnesyltransferase 2 (295 aa).

A run of 9 helical transmembrane segments spans residues 9–29, 36–56, 83–103, 108–128, 135–155, 163–183, 209–229, 230–250, and 264–284; these read ITKP…FFLA, FALF…GCVF, LPLA…LLYV, LSAF…SLWL, GTLV…CAVS, VTLL…IAIF, IVLY…GGYA, GLGY…MAWG, and VFGF…VDSQ.

It belongs to the UbiA prenyltransferase family. Protoheme IX farnesyltransferase subfamily.

The protein resides in the cell inner membrane. It catalyses the reaction heme b + (2E,6E)-farnesyl diphosphate + H2O = Fe(II)-heme o + diphosphate. The protein operates within porphyrin-containing compound metabolism; heme O biosynthesis; heme O from protoheme: step 1/1. Converts heme B (protoheme IX) to heme O by substitution of the vinyl group on carbon 2 of heme B porphyrin ring with a hydroxyethyl farnesyl side group. The protein is Protoheme IX farnesyltransferase 2 of Pseudomonas putida (strain ATCC 47054 / DSM 6125 / CFBP 8728 / NCIMB 11950 / KT2440).